Consider the following 140-residue polypeptide: Ribosome-binding factor A (140 aa).

Residues 121-140 form a disordered region; sequence KTEQTSADDDADRLDSEDRS.

Belongs to the RbfA family. In terms of assembly, monomer. Binds 30S ribosomal subunits, but not 50S ribosomal subunits or 70S ribosomes.

It is found in the cytoplasm. In terms of biological role, one of several proteins that assist in the late maturation steps of the functional core of the 30S ribosomal subunit. Associates with free 30S ribosomal subunits (but not with 30S subunits that are part of 70S ribosomes or polysomes). Required for efficient processing of 16S rRNA. May interact with the 5'-terminal helix region of 16S rRNA. The protein is Ribosome-binding factor A of Psychrobacter sp. (strain PRwf-1).